Consider the following 245-residue polypeptide: tRNA1(Val) (adenine(37)-N6)-methyltransferase (245 aa).

The protein belongs to the methyltransferase superfamily. tRNA (adenine-N(6)-)-methyltransferase family.

The protein resides in the cytoplasm. The enzyme catalyses adenosine(37) in tRNA1(Val) + S-adenosyl-L-methionine = N(6)-methyladenosine(37) in tRNA1(Val) + S-adenosyl-L-homocysteine + H(+). Its function is as follows. Specifically methylates the adenine in position 37 of tRNA(1)(Val) (anticodon cmo5UAC). The sequence is that of tRNA1(Val) (adenine(37)-N6)-methyltransferase from Escherichia coli O6:K15:H31 (strain 536 / UPEC).